Here is a 252-residue protein sequence, read N- to C-terminus: Protein BTG3 (252 aa).

Positions 138-165 are disordered; the sequence is VTSDYHSGSSSSDEETSKEVEVKPNSVT.

The protein belongs to the BTG family.

Overexpression impairs serum-induced cell cycle progression from the G0/G1 to S phase. The sequence is that of Protein BTG3 (BTG3) from Sus scrofa (Pig).